Consider the following 427-residue polypeptide: Serine--tRNA ligase (427 aa).

231–233 (TAE) is an L-serine binding site. 262–264 (RSE) serves as a coordination point for ATP. Glu285 contacts L-serine. An ATP-binding site is contributed by 349 to 352 (EISS). L-serine is bound at residue Ser385.

This sequence belongs to the class-II aminoacyl-tRNA synthetase family. Type-1 seryl-tRNA synthetase subfamily. In terms of assembly, homodimer. The tRNA molecule binds across the dimer.

The protein resides in the cytoplasm. The catalysed reaction is tRNA(Ser) + L-serine + ATP = L-seryl-tRNA(Ser) + AMP + diphosphate + H(+). It carries out the reaction tRNA(Sec) + L-serine + ATP = L-seryl-tRNA(Sec) + AMP + diphosphate + H(+). Its pathway is aminoacyl-tRNA biosynthesis; selenocysteinyl-tRNA(Sec) biosynthesis; L-seryl-tRNA(Sec) from L-serine and tRNA(Sec): step 1/1. Catalyzes the attachment of serine to tRNA(Ser). Is also able to aminoacylate tRNA(Sec) with serine, to form the misacylated tRNA L-seryl-tRNA(Sec), which will be further converted into selenocysteinyl-tRNA(Sec). This chain is Serine--tRNA ligase, found in Rhizobium etli (strain ATCC 51251 / DSM 11541 / JCM 21823 / NBRC 15573 / CFN 42).